Consider the following 365-residue polypeptide: tRNA-specific 2-thiouridylase MnmA (365 aa).

ATP contacts are provided by residues 6 to 13 and Met-32; that span reads AMSGGVDS. Catalysis depends on Cys-101, which acts as the Nucleophile. Cys-101 and Cys-199 form a disulfide bridge. Gly-125 is an ATP binding site. The interaction with tRNA stretch occupies residues 148-150; the sequence is KDQ. Cys-199 serves as the catalytic Cysteine persulfide intermediate.

The protein belongs to the MnmA/TRMU family.

Its subcellular location is the cytoplasm. It catalyses the reaction S-sulfanyl-L-cysteinyl-[protein] + uridine(34) in tRNA + AH2 + ATP = 2-thiouridine(34) in tRNA + L-cysteinyl-[protein] + A + AMP + diphosphate + H(+). In terms of biological role, catalyzes the 2-thiolation of uridine at the wobble position (U34) of tRNA, leading to the formation of s(2)U34. The polypeptide is tRNA-specific 2-thiouridylase MnmA (Kineococcus radiotolerans (strain ATCC BAA-149 / DSM 14245 / SRS30216)).